The primary structure comprises 334 residues: Leucine carboxyl methyltransferase 1 (334 aa).

Residues Lys-37, Arg-73, Gly-98, Asp-122, 171–172 (DL), and Glu-198 each bind S-adenosyl-L-methionine.

Belongs to the methyltransferase superfamily. LCMT family.

It carries out the reaction [phosphatase 2A protein]-C-terminal L-leucine + S-adenosyl-L-methionine = [phosphatase 2A protein]-C-terminal L-leucine methyl ester + S-adenosyl-L-homocysteine. Its function is as follows. Methylates the carboxyl group of the C-terminal leucine residue of protein phosphatase 2A catalytic subunits to form alpha-leucine ester residues. This chain is Leucine carboxyl methyltransferase 1 (LCMT1), found in Homo sapiens (Human).